The chain runs to 298 residues: Small ribosomal subunit protein uS3 (298 aa).

The KH type-2 domain maps to 39 to 107 (VREYLKAKLK…PVAVNIEEVR (69 aa)). The segment at 214 to 298 (PAAVEARTDE…PAAAADGKGE (85 aa)) is disordered. Residues 219-245 (ARTDEERRPRGPRRDDRGARPGADRPA) show a composition bias toward basic and acidic residues. Low complexity predominate over residues 277–298 (KPAVQRVRKVAAPAAAADGKGE).

It belongs to the universal ribosomal protein uS3 family. In terms of assembly, part of the 30S ribosomal subunit. Forms a tight complex with proteins S10 and S14.

Functionally, binds the lower part of the 30S subunit head. Binds mRNA in the 70S ribosome, positioning it for translation. This Albidiferax ferrireducens (strain ATCC BAA-621 / DSM 15236 / T118) (Rhodoferax ferrireducens) protein is Small ribosomal subunit protein uS3.